Here is a 345-residue protein sequence, read N- to C-terminus: Protein RecA (345 aa).

Residue 65–72 coordinates ATP; sequence GPESSGKT.

The protein belongs to the RecA family.

It is found in the cytoplasm. Its function is as follows. Can catalyze the hydrolysis of ATP in the presence of single-stranded DNA, the ATP-dependent uptake of single-stranded DNA by duplex DNA, and the ATP-dependent hybridization of homologous single-stranded DNAs. It interacts with LexA causing its activation and leading to its autocatalytic cleavage. The polypeptide is Protein RecA (Stenotrophomonas maltophilia (strain R551-3)).